A 246-amino-acid polypeptide reads, in one-letter code: Mast cell protease 1 (246 aa).

The first 18 residues, 1 to 18, serve as a signal peptide directing secretion; the sequence is MQALLFLLALLWPPEAGA. Positions 19–20 are cleaved as a propeptide — activation peptide; it reads EE. One can recognise a Peptidase S1 domain in the interval 21 to 244; that stretch reads IIGGVESKPH…YVPWINLVIR (224 aa). Cysteines 50 and 66 form a disulfide. Active-site charge relay system residues include H65 and D109. 2 disulfides stabilise this stretch: C143/C208 and C174/C187. The active-site Charge relay system is S202.

This sequence belongs to the peptidase S1 family. Granzyme subfamily.

The sequence is that of Mast cell protease 1 from Meriones unguiculatus (Mongolian jird).